The chain runs to 559 residues: Urocanate hydratase (559 aa).

NAD(+)-binding positions include 54–55, glutamine 132, 178–180, glutamate 198, arginine 203, 244–245, 265–269, 275–276, and tyrosine 324; these read GG, GMG, NA, QTSAH, and YL. Cysteine 412 is an active-site residue. Residue glycine 494 coordinates NAD(+).

Belongs to the urocanase family. NAD(+) serves as cofactor.

The protein resides in the cytoplasm. It carries out the reaction 4-imidazolone-5-propanoate = trans-urocanate + H2O. It participates in amino-acid degradation; L-histidine degradation into L-glutamate; N-formimidoyl-L-glutamate from L-histidine: step 2/3. Catalyzes the conversion of urocanate to 4-imidazolone-5-propionate. The sequence is that of Urocanate hydratase from Photorhabdus laumondii subsp. laumondii (strain DSM 15139 / CIP 105565 / TT01) (Photorhabdus luminescens subsp. laumondii).